The chain runs to 363 residues: Pulmonary surfactant-associated protein B (363 aa).

Positions 1 to 16 (LLWLLLLPTLCGLGAA) are cleaved as a signal peptide. Residues 17–180 (DWSAPSLACA…PHTQDLSEQQ (164 aa)) constitute a propeptide that is removed on maturation. In terms of domain architecture, Saposin A-type spans 18–58 (WSAPSLACARGPAFWCQSLEQALQCRALGHCLQEVWGNARA). Saposin B-type domains lie at 58–140 (ADDL…KPGL), 184–261 (PLPY…SHED), and 277–352 (QESK…RTTF). 9 disulfide bridges follow: Cys62–Cys136, Cys65–Cys130, Cys93–Cys105, Cys188–Cys257, Cys191–Cys251, Cys215–Cys226, Cys281–Cys348, Cys284–Cys342, and Cys307–Cys317. Positions 260–363 (EDSAGPALAS…PLQCIHIPHF (104 aa)) are excised as a propeptide. Asn293 is a glycosylation site (N-linked (GlcNAc...) asparagine).

Homodimer; disulfide-linked.

The protein localises to the secreted. It localises to the extracellular space. The protein resides in the surface film. Functionally, pulmonary surfactant-associated proteins promote alveolar stability by lowering the surface tension at the air-liquid interface in the peripheral air spaces. SP-B increases the collapse pressure of palmitic acid to nearly 70 millinewtons per meter. In Canis lupus familiaris (Dog), this protein is Pulmonary surfactant-associated protein B (SFTPB).